The primary structure comprises 270 residues: Shikimate dehydrogenase (NADP(+)) (270 aa).

Shikimate is bound by residues 15–17 (SKS) and Thr-62. The Proton acceptor role is filled by Lys-66. Shikimate is bound by residues Asn-87 and Asp-102. NADP(+)-binding positions include 127–131 (GAGGA), 151–156 (NRTVAR), and Met-214. Residue Tyr-216 coordinates shikimate. Gly-238 is an NADP(+) binding site.

The protein belongs to the shikimate dehydrogenase family. As to quaternary structure, homodimer.

It catalyses the reaction shikimate + NADP(+) = 3-dehydroshikimate + NADPH + H(+). The protein operates within metabolic intermediate biosynthesis; chorismate biosynthesis; chorismate from D-erythrose 4-phosphate and phosphoenolpyruvate: step 4/7. Involved in the biosynthesis of the chorismate, which leads to the biosynthesis of aromatic amino acids. Catalyzes the reversible NADPH linked reduction of 3-dehydroshikimate (DHSA) to yield shikimate (SA). The chain is Shikimate dehydrogenase (NADP(+)) from Alkalilimnicola ehrlichii (strain ATCC BAA-1101 / DSM 17681 / MLHE-1).